A 165-amino-acid chain; its full sequence is Phosphopantetheine adenylyltransferase (165 aa).

Ser-10 is a binding site for substrate. Residues 10–11 and His-18 each bind ATP; that span reads SF. The substrate site is built by Lys-42, Thr-79, and Arg-93. ATP-binding positions include 94 to 96, Glu-104, and 129 to 135; these read GLR and VRPITAT.

This sequence belongs to the bacterial CoaD family. In terms of assembly, homohexamer. Mg(2+) serves as cofactor.

Its subcellular location is the cytoplasm. The catalysed reaction is (R)-4'-phosphopantetheine + ATP + H(+) = 3'-dephospho-CoA + diphosphate. The protein operates within cofactor biosynthesis; coenzyme A biosynthesis; CoA from (R)-pantothenate: step 4/5. Reversibly transfers an adenylyl group from ATP to 4'-phosphopantetheine, yielding dephospho-CoA (dPCoA) and pyrophosphate. The chain is Phosphopantetheine adenylyltransferase from Nitrobacter winogradskyi (strain ATCC 25391 / DSM 10237 / CIP 104748 / NCIMB 11846 / Nb-255).